A 245-amino-acid polypeptide reads, in one-letter code: 5-oxoprolinase subunit A (245 aa).

Belongs to the LamB/PxpA family. As to quaternary structure, forms a complex composed of PxpA, PxpB and PxpC.

It catalyses the reaction 5-oxo-L-proline + ATP + 2 H2O = L-glutamate + ADP + phosphate + H(+). Catalyzes the cleavage of 5-oxoproline to form L-glutamate coupled to the hydrolysis of ATP to ADP and inorganic phosphate. In Serratia proteamaculans (strain 568), this protein is 5-oxoprolinase subunit A.